The sequence spans 213 residues: ATP synthase peripheral stalk subunit OSCP, mitochondrial (213 aa).

A mitochondrion-targeting transit peptide spans 1-23 (MAAPAVSGLSRQVRCFSTSVVRP). An SIFI-degron motif is present at residues 5-23 (AVSGLSRQVRCFSTSVVRP). Lysine 54, lysine 60, lysine 70, and lysine 73 each carry N6-acetyllysine. Residue lysine 90 is modified to N6-succinyllysine. Residues lysine 158 and lysine 162 each carry the N6-acetyllysine; alternate modification. Residues lysine 158 and lysine 162 each carry the N6-succinyllysine; alternate modification. Residues lysine 172, lysine 176, and lysine 192 each carry the N6-acetyllysine modification. The residue at position 199 (lysine 199) is an N6-succinyllysine.

It belongs to the ATPase delta chain family. As to quaternary structure, component of the ATP synthase complex composed at least of ATP5F1A/subunit alpha, ATP5F1B/subunit beta, ATP5MC1/subunit c (homooctomer), MT-ATP6/subunit a, MT-ATP8/subunit 8, ATP5ME/subunit e, ATP5MF/subunit f, ATP5MG/subunit g, ATP5MK/subunit k, ATP5MJ/subunit j, ATP5F1C/subunit gamma, ATP5F1D/subunit delta, ATP5F1E/subunit epsilon, ATP5PF/subunit F6, ATP5PB/subunit b, ATP5PD/subunit d, ATP5PO/subunit OSCP. ATP synthase complex consists of a soluble F(1) head domain (subunits alpha(3) and beta(3)) - the catalytic core - and a membrane F(0) domain - the membrane proton channel (subunits c, a, 8, e, f, g, k and j). These two domains are linked by a central stalk (subunits gamma, delta, and epsilon) rotating inside the F1 region and a stationary peripheral stalk (subunits F6, b, d, and OSCP). Post-translationally, acetylation at Lys-162 decreases ATP production. Deacetylated by SIRT3. In response to mitochondrial stress, the precursor protein is ubiquitinated by the SIFI complex in the cytoplasm before mitochondrial import, leading to its degradation. Within the SIFI complex, UBR4 initiates ubiquitin chain that are further elongated or branched by KCMF1.

It is found in the mitochondrion. The protein resides in the mitochondrion inner membrane. Its function is as follows. Subunit OSCP, of the mitochondrial membrane ATP synthase complex (F(1)F(0) ATP synthase or Complex V) that produces ATP from ADP in the presence of a proton gradient across the membrane which is generated by electron transport complexes of the respiratory chain. ATP synthase complex consist of a soluble F(1) head domain - the catalytic core - and a membrane F(1) domain - the membrane proton channel. These two domains are linked by a central stalk rotating inside the F(1) region and a stationary peripheral stalk. During catalysis, ATP synthesis in the catalytic domain of F(1) is coupled via a rotary mechanism of the central stalk subunits to proton translocation. In vivo, can only synthesize ATP although its ATP hydrolase activity can be activated artificially in vitro. Part of the complex F(0) domain. Part of the complex F(0) domain and the peripheric stalk, which acts as a stator to hold the catalytic alpha(3)beta(3) subcomplex and subunit a/ATP6 static relative to the rotary elements. The polypeptide is ATP synthase peripheral stalk subunit OSCP, mitochondrial (Homo sapiens (Human)).